A 701-amino-acid polypeptide reads, in one-letter code: DNA-directed RNA polymerase subunit beta' (701 aa).

Positions 76, 78, 94, and 97 each coordinate Zn(2+). Residues Asp-511, Asp-513, and Asp-515 each contribute to the Mg(2+) site.

Belongs to the RNA polymerase beta' chain family. RpoC1 subfamily. In terms of assembly, in plastids the minimal PEP RNA polymerase catalytic core is composed of four subunits: alpha, beta, beta', and beta''. When a (nuclear-encoded) sigma factor is associated with the core the holoenzyme is formed, which can initiate transcription. Mg(2+) serves as cofactor. Zn(2+) is required as a cofactor.

The protein localises to the plastid. It is found in the chloroplast. It carries out the reaction RNA(n) + a ribonucleoside 5'-triphosphate = RNA(n+1) + diphosphate. In terms of biological role, DNA-dependent RNA polymerase catalyzes the transcription of DNA into RNA using the four ribonucleoside triphosphates as substrates. The chain is DNA-directed RNA polymerase subunit beta' from Pelargonium hortorum (Common geranium).